Consider the following 313-residue polypeptide: Ribosomal RNA small subunit methyltransferase H (313 aa).

Residues 35 to 37 (GGH), D55, F81, D103, and Q110 contribute to the S-adenosyl-L-methionine site.

The protein belongs to the methyltransferase superfamily. RsmH family.

The protein localises to the cytoplasm. The enzyme catalyses cytidine(1402) in 16S rRNA + S-adenosyl-L-methionine = N(4)-methylcytidine(1402) in 16S rRNA + S-adenosyl-L-homocysteine + H(+). Specifically methylates the N4 position of cytidine in position 1402 (C1402) of 16S rRNA. The protein is Ribosomal RNA small subunit methyltransferase H of Pseudomonas aeruginosa (strain LESB58).